Reading from the N-terminus, the 291-residue chain is Cytosolic Fe-S cluster assembly factor CFD1 (291 aa).

Position 24 to 31 (24 to 31 (GKGGVGKS)) interacts with ATP. Positions 199 and 202 each coordinate [4Fe-4S] cluster. The segment at 270–291 (ENEEEAKETAEEEKSRAATNGQ) is disordered. Positions 276-285 (KETAEEEKSR) are enriched in basic and acidic residues.

It belongs to the Mrp/NBP35 ATP-binding proteins family. NUBP2/CFD1 subfamily. In terms of assembly, heterotetramer of 2 NBP35 and 2 CFD1 chains. Requires [4Fe-4S] cluster as cofactor.

Its subcellular location is the cytoplasm. Functionally, component of the cytosolic iron-sulfur (Fe/S) protein assembly (CIA) machinery. Required for maturation of extramitochondrial Fe-S proteins. The NBP35-CFD1 heterotetramer forms a Fe-S scaffold complex, mediating the de novo assembly of an Fe-S cluster and its transfer to target apoproteins. Required for biogenesis and export of both ribosomal subunits, which may reflect a role in assembly of the Fe/S clusters in RLI1, a protein which performs rRNA processing and ribosome export. In Yarrowia lipolytica (strain CLIB 122 / E 150) (Yeast), this protein is Cytosolic Fe-S cluster assembly factor CFD1.